A 128-amino-acid polypeptide reads, in one-letter code: Centrosomal protein 15 (128 aa).

Its subcellular location is the cell projection. The protein resides in the cilium. Functionally, may play a role in ciliary assembly. The polypeptide is Centrosomal protein 15 (Homo sapiens (Human)).